Reading from the N-terminus, the 137-residue chain is Fluoride-specific ion channel FluC 1 (137 aa).

A run of 4 helical transmembrane segments spans residues 3–23 (PLVV…RLVL), 42–62 (INVT…GHGL), 69–89 (ILGT…YEAV), and 107–127 (MMFL…LAVA). The Na(+) site is built by glycine 76 and threonine 79.

Belongs to the fluoride channel Fluc/FEX (TC 1.A.43) family.

The protein localises to the cell membrane. The catalysed reaction is fluoride(in) = fluoride(out). With respect to regulation, na(+) is not transported, but it plays an essential structural role and its presence is essential for fluoride channel function. Its function is as follows. Fluoride-specific ion channel. Important for reducing fluoride concentration in the cell, thus reducing its toxicity. In Leifsonia xyli subsp. xyli (strain CTCB07), this protein is Fluoride-specific ion channel FluC 1.